The following is a 511-amino-acid chain: MVLLAAAVCTKAGKAIVSRQFVEMTRTRIEGLLAAFPKLMNTGKQHTFVETESVRYVYQPMEKLYMVLITTKNSNILEDLETLRLFSRVIPEYCRALEENEISEHCFDLIFAFDEIVALGYRENVNLAQIRTFTEMDSHEEKVFRAVRETQEREAKAEMRRKAKELQQARRDAERQGKKAPGFGGFGSSAVSGGSTAAMITETIIETDKPKVAPAPARPSGPSKALKLGAKGKEVDNFVDKLKSEGETIMSSNMGKRTSEATKVHAPPINMESVHMKIEEKITLTCGRDGGLQNMELHGMIMLRISDDKFGRIRLHVENEDKKGVQLQTHPNVDKKLFTAESLIGLKNPEKSFPVNSDVGVLKWRLQTTEESFIPLTINCWPSESGNGCDVNIEYELQEDNLELNDVVITIPLPSGVGAPVIGEIDGEYRHDSRRNTLEWCLPVIDAKNKSGSLEFSIPGQPNDFFPVQVSFISKKNYCNIQVTKVTQVDGNSPVRFSTETTFLVDKYEIL.

Residues 168–177 show a composition bias toward basic and acidic residues; sequence QARRDAERQG. Residues 168 to 188 form a disordered region; it reads QARRDAERQGKKAPGFGGFGS. Ser223 carries the phosphoserine modification. Residues Lys233 and Lys241 each carry the N6-acetyllysine modification. Ser244 bears the Phosphoserine mark. In terms of domain architecture, MHD spans 271 to 511; it reads MESVHMKIEE…TFLVDKYEIL (241 aa). Lys309 and Lys351 each carry N6-acetyllysine. A Phosphoserine modification is found at Ser493.

It belongs to the adaptor complexes medium subunit family. Delta-COP subfamily. As to quaternary structure, oligomeric complex that consists of at least the alpha, beta, beta', gamma, delta, epsilon and zeta subunits.

Its subcellular location is the cytoplasm. It is found in the golgi apparatus membrane. The protein resides in the cytoplasmic vesicle. It localises to the COPI-coated vesicle membrane. Its function is as follows. The coatomer is a cytosolic protein complex that binds to dilysine motifs and reversibly associates with Golgi non-clathrin-coated vesicles, which further mediate biosynthetic protein transport from the ER, via the Golgi up to the trans Golgi network. Coatomer complex is required for budding from Golgi membranes, and is essential for the retrograde Golgi-to-ER transport of dilysine-tagged proteins. In mammals, the coatomer can only be recruited by membranes associated to ADP-ribosylation factors (ARFs), which are small GTP-binding proteins; the complex also influences the Golgi structural integrity, as well as the processing, activity, and endocytic recycling of LDL receptors. In Mus musculus (Mouse), this protein is Coatomer subunit delta (Arcn1).